The chain runs to 177 residues: SAYSvFN domain-containing protein 1 (177 aa).

Residues 1-100 (MADFQEQLRQ…CLKYTLWTVY (100 aa)) lie on the Cytoplasmic side of the membrane. Residues 57–70 (SENSQDEAVTSSES) are compositionally biased toward polar residues. Residues 57-85 (SENSQDEAVTSSESELVPEEQPTRSTDHH) are disordered. Positions 101–121 (LLFWITLYVIAIKLSFGLVFL) form an intramembrane region, helical. Residues 122–177 (MFSALFGIYFNTRTEPKKRNEMSAYSVFNKNCESIDGTLKAEQFEREIRYGSGSVR) are Cytoplasmic-facing.

It belongs to the SAYSD1 family.

It localises to the endoplasmic reticulum membrane. Its function is as follows. Ufmylation 'reader' component of a translocation-associated quality control pathway, a mechanism that takes place when a ribosome has stalled during translation, and which is required to degrade clogged substrates. Specifically recognizes and binds ufmylated ribosomes when a ribosome has stalled, promoting the transport of stalled nascent chain to lysosomes for degradation. In Drosophila melanogaster (Fruit fly), this protein is SAYSvFN domain-containing protein 1.